The following is a 443-amino-acid chain: CBL-interacting protein kinase 29 (443 aa).

The Protein kinase domain occupies Y32–F292. ATP-binding positions include L38–V46 and K61. Catalysis depends on D164, which acts as the Proton acceptor. The activation loop stretch occupies residues D182–E207. An NAF domain is found at A313–G347. The PPI stretch occupies residues P350–V379.

It belongs to the protein kinase superfamily. CAMK Ser/Thr protein kinase family. SNF1 subfamily. Mn(2+) is required as a cofactor.

The enzyme catalyses L-seryl-[protein] + ATP = O-phospho-L-seryl-[protein] + ADP + H(+). It carries out the reaction L-threonyl-[protein] + ATP = O-phospho-L-threonyl-[protein] + ADP + H(+). CIPK serine-threonine protein kinases interact with CBL proteins. Binding of a CBL protein to the regulatory NAF domain of CIPK protein lead to the activation of the kinase in a calcium-dependent manner. The sequence is that of CBL-interacting protein kinase 29 (CIPK29) from Oryza sativa subsp. japonica (Rice).